A 141-amino-acid chain; its full sequence is Large ribosomal subunit protein uL11 (141 aa).

Belongs to the universal ribosomal protein uL11 family. In terms of assembly, part of the ribosomal stalk of the 50S ribosomal subunit. Interacts with L10 and the large rRNA to form the base of the stalk. L10 forms an elongated spine to which L12 dimers bind in a sequential fashion forming a multimeric L10(L12)X complex. One or more lysine residues are methylated.

Functionally, forms part of the ribosomal stalk which helps the ribosome interact with GTP-bound translation factors. This chain is Large ribosomal subunit protein uL11, found in Bacillus cereus (strain ATCC 10987 / NRS 248).